We begin with the raw amino-acid sequence, 408 residues long: Myb/SANT-like DNA-binding domain-containing protein 4 (408 aa).

In terms of domain architecture, Myb-like spans 4-77 (LKRKRKSNFS…EVKRRYLDWR (74 aa)). The stretch at 236 to 367 (HLLVTLEKQK…IEKERLQDAL (132 aa)) forms a coiled coil.

The polypeptide is Myb/SANT-like DNA-binding domain-containing protein 4 (msantd4) (Xenopus tropicalis (Western clawed frog)).